The sequence spans 1904 residues: Voltage-dependent calcium channel type A subunit alpha-1 (1904 aa).

The segment at 1–45 (MLGGVGGRHMSTRRRGSSPLVRGGAGLTGYAGPGASGNSNDVAAI) is disordered. The segment covering 23–35 (GGAGLTGYAGPGA) has biased composition (gly residues). The Cytoplasmic portion of the chain corresponds to 30-168 (YAGPGASGNS…KHTRFIIEWP (139 aa)). One copy of the I repeat lies at 155–447 (NCIRKHTRFI…LVLGVLSGEF (293 aa)). Residues 169–187 (PFEYAVLLTIIANCVVLAL) traverse the membrane as a helical segment. The Extracellular portion of the chain corresponds to 188–205 (EEHLPKQDKTILAQKLEA). A helical transmembrane segment spans residues 206-225 (TEIYFLGIFCVEASLKILAL). Residues 226–237 (GFVLHRGSYLRN) are Cytoplasmic-facing. The helical transmembrane segment at 238–259 (IWNIMDFFVVVTGFITAFSQGI) threads the bilayer. The Extracellular segment spans residues 260 to 264 (ELDMD). Residues 265-283 (LRTLRAIRVLRPLKLVSGI) form a helical membrane-spanning segment. Residues 284-302 (PSLQVVLKSIIKAMAPLLQ) are Cytoplasmic-facing. A helical transmembrane segment spans residues 303-322 (IGLLVLFAIVIFAIIGLEFY). Over 323–419 (SGTLHKTCYS…WTNDALGSTY (97 aa)) the chain is Extracellular. N-linked (GlcNAc...) asparagine glycosylation is found at asparagine 353 and asparagine 367. A helical membrane pass occupies residues 420–444 (NWIYFIPLIVLGSFFMLNLVLGVLS). The Cytoplasmic segment spans residues 445–568 (GEFAKEREKV…YWIRKSVKSQ (124 aa)). Positions 513-543 (KKLGKSKSTDTEEEEGDDDQDDGELSSSTKE) are disordered. Positions 523 to 536 (TEEEEGDDDQDDGE) are enriched in acidic residues. An II repeat occupies 554-797 (EKRFRYWIRK…VFLAIAVDNL (244 aa)). Residues 569-587 (KFYWFVIVLVFFNTVCVAV) traverse the membrane as a helical segment. Topologically, residues 588–602 (EHYGQPQWLTDFLYF) are extracellular. Residues 603 to 622 (AEFVFLALFMLEMFIKVYAL) form a helical membrane-spanning segment. Residues 623 to 630 (GPRTYFDS) are Cytoplasmic-facing. A helical transmembrane segment spans residues 631 to 649 (SFNRFDCVVISGSIFEVIW). The Extracellular portion of the chain corresponds to 650 to 658 (SEVKSGSFG). Residues 659–677 (LSVLRALRLLRIFKVTKYW) traverse the membrane as a helical segment. Residues 678–696 (KSLRNLVISLLSSMRSIIS) are Cytoplasmic-facing. A helical transmembrane segment spans residues 697–716 (LLFLLFLFILIFALLGMQLF). Residues 717-769 (GGQFNFDSGTPPTNFNTFPIALLTVFQILTGEDWNEVMYQGIESQGGHKKGMI) lie on the Extracellular side of the membrane. A helical membrane pass occupies residues 770-794 (YSLYFIVLVLFGNYTLLNVFLAIAV). The Cytoplasmic portion of the chain corresponds to 795 to 895 (DNLANAQELS…VRRAAHWVVN (101 aa)). The tract at residues 827–869 (QSLQNPKDGGAPKVEICPPNGKGGKQSSEEEKKQDEDDDTGPK) is disordered. One copy of the III repeat lies at 890–1177 (AHWVVNLRYF…IITFQEQGEA (288 aa)). Residues 896-914 (LRYFDFFIMVVISLSSIAL) traverse the membrane as a helical segment. The Extracellular segment spans residues 915–930 (AAEDPVWEDSPRNEVL). The helical transmembrane segment at 931 to 950 (NYFDYAFTGVFTVEMILKII) threads the bilayer. Over 951–962 (DLGIILHPGSYL) the chain is Cytoplasmic. A helical transmembrane segment spans residues 963 to 981 (REFWNIMDAVVVICAAVSF). Residues 982 to 994 (AFDMTGSSAGQNL) are Extracellular-facing. A glycan (N-linked (GlcNAc...) asparagine) is linked at asparagine 993. The chain crosses the membrane as a helical span at residues 995-1013 (STIKSLRVLRVLRPLKTIK). At 1014–1032 (RVPKLKAVFDCVVNSLKNV) the chain is on the cytoplasmic side. The chain crosses the membrane as a helical span at residues 1033-1052 (INILIVYILFQFIFAVIAVQ). The Extracellular segment spans residues 1053–1141 (LFNGKFFYCS…EDKGPIQNFR (89 aa)). The chain crosses the membrane as a helical span at residues 1142-1166 (IEMSIFYIVYFIVFPFFFVNIFVAL). The Cytoplasmic segment spans residues 1167–1221 (IIITFQEQGEAELQDGEIDKNQKSCIDFTIQARPLERYMPKERNSVKYKIWRIVV). The IV repeat unit spans residues 1214–1470 (YKIWRIVVST…DNFDYLTRDS (257 aa)). Residues 1222–1250 (STPFEYFIMGLIVLNTVLLMMKFHRQSDA) traverse the membrane as a helical segment. Residues 1251–1255 (YKNTL) lie on the Extracellular side of the membrane. A helical membrane pass occupies residues 1256–1275 (KYMNMCFTGMFTVECILKIA). At 1276–1283 (AFGVRNFF) the chain is on the cytoplasmic side. Residues 1284–1302 (KDAWNTFDFITVIGSIVDA) form a helical membrane-spanning segment. Residues 1303–1309 (LVIEFGE) lie on the Extracellular side of the membrane. The chain crosses the membrane as a helical span at residues 1310 to 1328 (NFINVGFLRLFRAARLIKL). The Cytoplasmic segment spans residues 1329–1347 (LRQGYTIRILLWTFVQSFK). Residues 1348 to 1367 (ALPYVCLLIAMLFFIYAIIG) form a helical membrane-spanning segment. Residues 1368–1431 (MQVFGNIALD…AKAGKQEGGC (64 aa)) lie on the Extracellular side of the membrane. Positions 1430–1471 (GCGSNIAYAYFVSFIFFCSFLMLNLFVAVIMDNFDYLTRDSS) are phenylalkylamine binding. A helical membrane pass occupies residues 1432-1456 (GSNIAYAYFVSFIFFCSFLMLNLFV). Residues 1457–1904 (AVIMDNFDYL…HSDSDEDDWC (448 aa)) lie on the Cytoplasmic side of the membrane. One can recognise an EF-hand domain in the interval 1476–1511 (HHLDEFVRIWAEYDPNATGKIHYTEMYDMLKNMDPP). Residues aspartate 1489, asparagine 1491, threonine 1493, lysine 1495, and glutamate 1500 each coordinate Ca(2+). 3 disordered regions span residues 1652–1694 (THTG…HEGP), 1710–1788 (THHP…HSYP), and 1870–1904 (GGRL…DDWC). Low complexity predominate over residues 1670 to 1681 (RSPSLRHSPGRP). Positions 1682-1691 (GYDHHGHYYH) are enriched in basic and acidic residues. Residues 1710-1725 (THHPHPSQYNHRHRMR) are compositionally biased toward basic residues. Residues 1727 to 1740 (PWSASTSPARTPSP) are compositionally biased toward low complexity. The segment covering 1751–1762 (GTTSLEQRSRSP) has biased composition (polar residues). The span at 1771-1784 (PHTHQHYHRHHPHQ) shows a compositional bias: basic residues.

It belongs to the calcium channel alpha-1 subunit (TC 1.A.1.11) family. CACNA1I subfamily. Interacts with CATSPER1 and CATSPER2, leading to suppress T-type calcium channel activity.

Its subcellular location is the membrane. Its function is as follows. Voltage-sensitive calcium channels (VSCC) mediate the entry of calcium ions into excitable cells and are also involved in a variety of calcium-dependent processes, including muscle contraction, neurotransmitter release, gene expression, cell motility, cell division and cell death. In Apis mellifera (Honeybee), this protein is Voltage-dependent calcium channel type A subunit alpha-1 (CAC).